A 357-amino-acid chain; its full sequence is tRNA pseudouridine synthase Pus10 (357 aa).

Positions 1–118 (MNLCRECYGI…TFTFELQIRP (118 aa)) constitute a THUMP domain. D187 acts as the Nucleophile in catalysis. 2 residues coordinate substrate: Y251 and Y322.

The protein belongs to the pseudouridine synthase Pus10 family.

The catalysed reaction is uridine(54) in tRNA = pseudouridine(54) in tRNA. It carries out the reaction uridine(55) in tRNA = pseudouridine(55) in tRNA. Responsible for synthesis of pseudouridine from uracil-54 and uracil-55 in the psi GC loop of transfer RNAs. The protein is tRNA pseudouridine synthase Pus10 of Archaeoglobus fulgidus (strain ATCC 49558 / DSM 4304 / JCM 9628 / NBRC 100126 / VC-16).